The sequence spans 126 residues: Small ribosomal subunit protein uS12 (126 aa).

A disordered region spans residues 1-28 (MPTINQLVRKGRQSETTKSKSPALQDCP). D89 carries the post-translational modification 3-methylthioaspartic acid. The segment at 103–126 (DTQGVKDRKQARSKYGAKRAKAGK) is disordered. Over residues 113–126 (ARSKYGAKRAKAGK) the composition is skewed to basic residues.

The protein belongs to the universal ribosomal protein uS12 family. Part of the 30S ribosomal subunit. Contacts proteins S8 and S17. May interact with IF1 in the 30S initiation complex.

In terms of biological role, with S4 and S5 plays an important role in translational accuracy. Its function is as follows. Interacts with and stabilizes bases of the 16S rRNA that are involved in tRNA selection in the A site and with the mRNA backbone. Located at the interface of the 30S and 50S subunits, it traverses the body of the 30S subunit contacting proteins on the other side and probably holding the rRNA structure together. The combined cluster of proteins S8, S12 and S17 appears to hold together the shoulder and platform of the 30S subunit. The chain is Small ribosomal subunit protein uS12 from Paraburkholderia phytofirmans (strain DSM 17436 / LMG 22146 / PsJN) (Burkholderia phytofirmans).